The sequence spans 352 residues: Selenide, water dikinase (352 aa).

Residue Cys23 is part of the active site. ATP-binding positions include Lys26 and 54–56; that span reads SRD. Asp57 contacts Mg(2+). ATP is bound by residues Asp74, Asp97, and 145–147; that span reads GHS. Residue Asp97 participates in Mg(2+) binding. A Mg(2+)-binding site is contributed by Asp233.

This sequence belongs to the selenophosphate synthase 1 family. Class I subfamily. In terms of assembly, homodimer. The cofactor is Mg(2+).

The enzyme catalyses hydrogenselenide + ATP + H2O = selenophosphate + AMP + phosphate + 2 H(+). Synthesizes selenophosphate from selenide and ATP. The chain is Selenide, water dikinase from Shewanella baltica (strain OS155 / ATCC BAA-1091).